The sequence spans 206 residues: Ribonuclease M5 (206 aa).

The Toprim domain maps to 8-91 (NEVIVVEGRD…AFLNRDEARP (84 aa)). The Mg(2+) site is built by Glu14, Asp60, and Asp62.

It belongs to the ribonuclease M5 family. Mg(2+) serves as cofactor.

The protein localises to the cytoplasm. The catalysed reaction is Endonucleolytic cleavage of RNA, removing 21 and 42 nucleotides, respectively, from the 5'- and 3'-termini of a 5S-rRNA precursor.. Its function is as follows. Required for correct processing of both the 5' and 3' ends of 5S rRNA precursor. Cleaves both sides of a double-stranded region yielding mature 5S rRNA in one step. The chain is Ribonuclease M5 from Lactococcus lactis subsp. lactis (strain IL1403) (Streptococcus lactis).